The chain runs to 195 residues: Penicillin-binding protein activator LpoB (195 aa).

The signal sequence occupies residues 1 to 16 (MKKRALIVLAALVLAS). A lipid anchor (N-palmitoyl cysteine) is attached at cysteine 17. Residue cysteine 17 is the site of S-diacylglycerol cysteine attachment. Positions 19–51 (SRKPASPPAPIEPVPPPVTVSVQPPPPATSEPV) are disordered. The segment covering 23–51 (ASPPAPIEPVPPPVTVSVQPPPPATSEPV) has biased composition (pro residues).

It belongs to the LpoB family. As to quaternary structure, interacts with PBP1b.

The protein localises to the cell outer membrane. In terms of biological role, regulator of peptidoglycan synthesis that is essential for the function of penicillin-binding protein 1B (PBP1b). This Sodalis glossinidius (strain morsitans) protein is Penicillin-binding protein activator LpoB.